The chain runs to 169 residues: Neudesin (169 aa).

Positions 1 to 28 are cleaved as a signal peptide; sequence MAGPAPGRRLVALALIVALAVGLPTAGA. The region spanning 41–126 is the Cytochrome b5 heme-binding domain; that stretch reads VRLFTEEELA…EELESLDDVF (86 aa). Lysine 133 carries the N6-acetyllysine modification. The segment at 148 to 169 is disordered; that stretch reads DGSPNLDFKPEDQPHFDIKDEF. Residues 155 to 169 show a composition bias toward basic and acidic residues; it reads FKPEDQPHFDIKDEF.

Belongs to the cytochrome b5 family. MAPR subfamily. In terms of assembly, interacts with PINK1 and PARK7.

It is found in the secreted. Its subcellular location is the extracellular space. The protein localises to the mitochondrion. It localises to the endoplasmic reticulum. Its function is as follows. Acts as a neurotrophic factor in postnatal mature neurons enhancing neuronal survival. Promotes cell proliferation and neurogenesis in undifferentiated neural progenitor cells at the embryonic stage and inhibits differentiation of astrocytes. Its neurotrophic activity is exerted via MAPK1/ERK2, MAPK3/ERK1 and AKT1/AKT pathways. Neurotrophic activity is enhanced by binding to heme. Also acts as an anorexigenic neurotrophic factor that contributes to energy balance. The polypeptide is Neudesin (NENF) (Bos taurus (Bovine)).